The sequence spans 603 residues: GRLLLGSLLVSLESALSAPPPWKAPKERRHRAEEFTVGLTVTGEPCYFPFQYNRQLYHHCIHKGRPGPRPWCATTPNFDQDQQWAYCLEPKKVKDHCSKHNPCQRGGICVNTLSSPHCLCPDHLTGKHCQREKCFEPQLHRFFHENEIWFRTGPAGVAKCHCKGPDAHCKQMHSQECQTNPCLNGGRCLEVEGHHLCDCPMGYTGPFCDLDTTASCYEGRGVSYRGMARTTVSGAKCQRWASEATYRNMTAEQALRRGLGHHTFCRNPDNDTRPWCFVWMGNRLSWEYCDLAQCQYPPQPTATPHDRFEHPKLPSSRLSILQTPQPTTQNQALANELPETSSLLCGQRLRKRLSSLSRIVGGLVALPGAHPYIAALYWGSNFCSGSLIAPCWVLTAAHCLQNRPAPEELKVVLGQDRHNQSCEHCQTLAVHSYRLHEAFSPSSYLNDLALLRLQKSADGSCAQLSPYVQTVCLPSGPAPPSESETTCCEVAGWGHQFEGAEEYSSFLQEAQVPLISSERCSSPEVHGDAFLSGMLCAGFLEGGTDACQGDSGGPLVCEDEAAEHRLILRGIVSWGSGCGDRNKPGVYTDVASYLTWIQKHTAS.

The first 18 residues, 1–18 (GRLLLGSLLVSLESALSA), serve as a signal peptide directing secretion. In terms of domain architecture, Fibronectin type-II spans 41-89 (VTGEPCYFPFQYNRQLYHHCIHKGRPGPRPWCATTPNFDQDQQWAYCLE). Disulfide bonds link cysteine 46–cysteine 72, cysteine 60–cysteine 87, cysteine 97–cysteine 109, cysteine 103–cysteine 118, cysteine 120–cysteine 129, cysteine 134–cysteine 162, cysteine 160–cysteine 169, cysteine 177–cysteine 188, cysteine 182–cysteine 197, cysteine 199–cysteine 208, cysteine 216–cysteine 294, cysteine 237–cysteine 276, cysteine 265–cysteine 289, cysteine 345–cysteine 472, cysteine 383–cysteine 399, cysteine 391–cysteine 461, cysteine 422–cysteine 425, cysteine 488–cysteine 557, cysteine 520–cysteine 536, and cysteine 547–cysteine 578. Residues 93–130 (VKDHCSKHNPCQRGGICVNTLSSPHCLCPDHLTGKHCQ) enclose the EGF-like 1 domain. One can recognise a Fibronectin type-I domain in the interval 132–172 (EKCFEPQLHRFFHENEIWFRTGPAGVAKCHCKGPDAHCKQM). Residues 173–209 (HSQECQTNPCLNGGRCLEVEGHHLCDCPMGYTGPFCD) enclose the EGF-like 2 domain. The 79-residue stretch at 216–294 (CYEGRGVSYR…SWEYCDLAQC (79 aa)) folds into the Kringle domain. N-linked (GlcNAc...) asparagine glycosylation is found at asparagine 248 and asparagine 270. The Peptidase S1 domain maps to 359–602 (IVGGLVALPG…YLTWIQKHTA (244 aa)). Histidine 398 functions as the Charge relay system in the catalytic mechanism. Asparagine 419 is a glycosylation site (N-linked (GlcNAc...) asparagine). The active-site Charge relay system is the aspartate 447. Serine 551 acts as the Charge relay system in catalysis.

The protein belongs to the peptidase S1 family. Interacts with HRG; the interaction, which is enhanced in the presence of zinc ions and inhibited by heparin-binding, inhibits factor XII autoactivation and contact-initiated coagulation. Post-translationally, O- and N-glycosylated.

The protein resides in the secreted. The enzyme catalyses Selective cleavage of Arg-|-Ile bonds in factor VII to form factor VIIa and factor XI to form factor XIa.. With respect to regulation, activity is promoted in the presence of negatively charged surfaces. Factor XII is a serum glycoprotein that participates in the initiation of blood coagulation, fibrinolysis, and the generation of bradykinin and angiotensin. Prekallikrein is cleaved by factor XII to form kallikrein, which then cleaves factor XII first to alpha-factor XIIa and then trypsin cleaves it to beta-factor XIIa. Alpha-factor XIIa activates factor XI to factor XIa. In Cavia porcellus (Guinea pig), this protein is Coagulation factor XII (F12).